The chain runs to 113 residues: Hydrogenase maturation factor HypA (113 aa).

His-2 lines the Ni(2+) pocket. Zn(2+) is bound by residues Cys-73, Cys-76, Cys-89, and Cys-92.

The protein belongs to the HypA/HybF family.

Functionally, involved in the maturation of [NiFe] hydrogenases. Required for nickel insertion into the metal center of the hydrogenase. The sequence is that of Hydrogenase maturation factor HypA from Paracoccus denitrificans (strain Pd 1222).